Reading from the N-terminus, the 184-residue chain is Structural protein V8 (184 aa).

The interval 14-35 (IYNKSNTLTNTPSNPTGNTNTL) is disordered.

Belongs to the sputnik virus V6 family.

It is found in the virion. The chain is Structural protein V8 from Sputnik virophage.